A 948-amino-acid chain; its full sequence is Alanine--tRNA ligase (948 aa).

4 residues coordinate Zn(2+): H638, H642, C739, and H743.

It belongs to the class-II aminoacyl-tRNA synthetase family. It depends on Zn(2+) as a cofactor.

The protein resides in the cytoplasm. It carries out the reaction tRNA(Ala) + L-alanine + ATP = L-alanyl-tRNA(Ala) + AMP + diphosphate. Functionally, catalyzes the attachment of alanine to tRNA(Ala) in a two-step reaction: alanine is first activated by ATP to form Ala-AMP and then transferred to the acceptor end of tRNA(Ala). Also edits incorrectly charged Ser-tRNA(Ala) and Gly-tRNA(Ala) via its editing domain. This chain is Alanine--tRNA ligase, found in Paracidovorax citrulli (strain AAC00-1) (Acidovorax citrulli).